Here is a 235-residue protein sequence, read N- to C-terminus: Sugar fermentation stimulation protein homolog (235 aa).

The protein belongs to the SfsA family.

This is Sugar fermentation stimulation protein homolog from Azotobacter vinelandii (strain DJ / ATCC BAA-1303).